Reading from the N-terminus, the 576-residue chain is (+)-alpha-terpineol synthase (576 aa).

The (2E)-geranyl diphosphate site is built by R286, D323, D327, R466, and N469. Positions 323 and 327 each coordinate Mg(2+). The short motif at 323–327 (DDVYD) is the DDXXD motif element. 3 residues coordinate Mg(2+): N469, T473, and E477.

Belongs to the terpene synthase family. Tpsb subfamily. The cofactor is Mg(2+). Mn(2+) is required as a cofactor.

It catalyses the reaction (2E)-geranyl diphosphate + H2O = (R)-alpha-terpineol + diphosphate. Its function is as follows. Monoterpene synthase producing mainly (+)-alpha-terpineol (44%) and (-)-limonene (33.6%) and lower amounts of (E)-geraniol (5.9%), linalool (5.0%), myrcene (3.4%), (-)-alpha-pinene (3.3%), (+)-sabinene (3.0%) and alpha-terpinolene (1.6%). The polypeptide is (+)-alpha-terpineol synthase (Santalum album (White sandalwood)).